The chain runs to 187 residues: UPF0301 protein KPK_0728 (187 aa).

Belongs to the UPF0301 (AlgH) family.

This chain is UPF0301 protein KPK_0728, found in Klebsiella pneumoniae (strain 342).